Reading from the N-terminus, the 232-residue chain is Uracil phosphoribosyltransferase (232 aa).

A GTP-binding site is contributed by 38–42 (KGLVK). 5-phospho-alpha-D-ribose 1-diphosphate contacts are provided by residues arginine 87, arginine 112, and 140-148 (DPMIATGST). Uracil contacts are provided by residues isoleucine 204 and 209-211 (GDA). Aspartate 210 lines the 5-phospho-alpha-D-ribose 1-diphosphate pocket.

Belongs to the UPRTase family. It depends on Mg(2+) as a cofactor.

It catalyses the reaction UMP + diphosphate = 5-phospho-alpha-D-ribose 1-diphosphate + uracil. The protein operates within pyrimidine metabolism; UMP biosynthesis via salvage pathway; UMP from uracil: step 1/1. With respect to regulation, allosterically activated by GTP. Functionally, catalyzes the conversion of uracil and 5-phospho-alpha-D-ribose 1-diphosphate (PRPP) to UMP and diphosphate. The chain is Uracil phosphoribosyltransferase from Thermococcus sibiricus (strain DSM 12597 / MM 739).